We begin with the raw amino-acid sequence, 107 residues long: UPF0060 membrane protein glr4174 (107 aa).

Transmembrane regions (helical) follow at residues 1-21 (MALL…FAFW), 26-46 (LGKN…FAWL), 58-78 (AYAA…WLVE), and 87-107 (LAGA…DRSP).

It belongs to the UPF0060 family.

It is found in the cell inner membrane. This chain is UPF0060 membrane protein glr4174, found in Gloeobacter violaceus (strain ATCC 29082 / PCC 7421).